Consider the following 471-residue polypeptide: Bifunctional protein GlmU (471 aa).

Residues 1–232 (MSDITAVLLA…EEDALAPNDR (232 aa)) form a pyrophosphorylase region. UDP-N-acetyl-alpha-D-glucosamine contacts are provided by residues 9–12 (LAAG), K23, Q73, 78–79 (GT), 102–104 (YGD), G141, E157, and N230. D104 is a Mg(2+) binding site. N230 contributes to the Mg(2+) binding site. Positions 233–253 (VELARAEARLRRQINERHMRN) are linker. The segment at 254–471 (GVTIINPDAT…RQRKMNREGT (218 aa)) is N-acetyltransferase. 2 residues coordinate UDP-N-acetyl-alpha-D-glucosamine: R335 and K353. Catalysis depends on H365, which acts as the Proton acceptor. UDP-N-acetyl-alpha-D-glucosamine contacts are provided by Y368 and N379. Residues A382, 388–389 (NY), A425, and R444 contribute to the acetyl-CoA site.

This sequence in the N-terminal section; belongs to the N-acetylglucosamine-1-phosphate uridyltransferase family. The protein in the C-terminal section; belongs to the transferase hexapeptide repeat family. In terms of assembly, homotrimer. It depends on Mg(2+) as a cofactor.

It is found in the cytoplasm. The catalysed reaction is alpha-D-glucosamine 1-phosphate + acetyl-CoA = N-acetyl-alpha-D-glucosamine 1-phosphate + CoA + H(+). It catalyses the reaction N-acetyl-alpha-D-glucosamine 1-phosphate + UTP + H(+) = UDP-N-acetyl-alpha-D-glucosamine + diphosphate. It functions in the pathway nucleotide-sugar biosynthesis; UDP-N-acetyl-alpha-D-glucosamine biosynthesis; N-acetyl-alpha-D-glucosamine 1-phosphate from alpha-D-glucosamine 6-phosphate (route II): step 2/2. The protein operates within nucleotide-sugar biosynthesis; UDP-N-acetyl-alpha-D-glucosamine biosynthesis; UDP-N-acetyl-alpha-D-glucosamine from N-acetyl-alpha-D-glucosamine 1-phosphate: step 1/1. Its pathway is bacterial outer membrane biogenesis; LPS lipid A biosynthesis. Catalyzes the last two sequential reactions in the de novo biosynthetic pathway for UDP-N-acetylglucosamine (UDP-GlcNAc). The C-terminal domain catalyzes the transfer of acetyl group from acetyl coenzyme A to glucosamine-1-phosphate (GlcN-1-P) to produce N-acetylglucosamine-1-phosphate (GlcNAc-1-P), which is converted into UDP-GlcNAc by the transfer of uridine 5-monophosphate (from uridine 5-triphosphate), a reaction catalyzed by the N-terminal domain. The chain is Bifunctional protein GlmU from Symbiobacterium thermophilum (strain DSM 24528 / JCM 14929 / IAM 14863 / T).